A 621-amino-acid polypeptide reads, in one-letter code: Uptake hydrogenase large subunit (621 aa).

Ni(2+) contacts are provided by C75, C78, C600, and C603.

Belongs to the [NiFe]/[NiFeSe] hydrogenase large subunit family. Heterodimer of a large and a small subunit. Ni(2+) serves as cofactor.

It localises to the cell membrane. The catalysed reaction is H2 + A = AH2. In terms of biological role, this enzyme recycles the H(2) produced by nitrogenase to increase the production of ATP and to protect nitrogenase against inhibition or damage by O(2) under carbon- or phosphate-limited conditions. The protein is Uptake hydrogenase large subunit (hupL) of Alcaligenes hydrogenophilus.